Here is a 610-residue protein sequence, read N- to C-terminus: UvrABC system protein C (610 aa).

Residues 16 to 94 (SQPGVYRMYD…IKLYQPRYNV (79 aa)) enclose the GIY-YIG domain. A UVR domain is found at 204-239 (DQVLTQLIARMEKASQSLEFEEAARIRDQIQAVRRV). The interval 540–559 (HAISGHRKKRAKVKSTSSLE) is disordered. The segment covering 543–552 (SGHRKKRAKV) has biased composition (basic residues).

The protein belongs to the UvrC family. In terms of assembly, interacts with UvrB in an incision complex.

Its subcellular location is the cytoplasm. Functionally, the UvrABC repair system catalyzes the recognition and processing of DNA lesions. UvrC both incises the 5' and 3' sides of the lesion. The N-terminal half is responsible for the 3' incision and the C-terminal half is responsible for the 5' incision. This chain is UvrABC system protein C, found in Klebsiella pneumoniae (strain 342).